The primary structure comprises 426 residues: Transcription factor bHLH60 (426 aa).

2 stretches are compositionally biased toward polar residues: residues 117 to 137 and 148 to 172; these read QNGN…SSAN and TDSS…QNNR. A disordered region spans residues 117 to 201; that stretch reads QNGNISGETP…SSEENEKLPY (85 aa). A compositionally biased stretch (basic and acidic residues) spans 191-200; the sequence is KSSEENEKLP. The 98-residue stretch at 210–307 folds into the bHLH domain; the sequence is QATDSHSLAE…DEIINHVQSL (98 aa). Residues 367–398 are disordered; sequence HRQLQQPPTQQWPFDGLNQPVWGREEDQAHGN.

In terms of assembly, homodimer. As to expression, expressed constitutively in roots, leaves, stems, and flowers.

It is found in the nucleus. The polypeptide is Transcription factor bHLH60 (BHLH60) (Arabidopsis thaliana (Mouse-ear cress)).